A 73-amino-acid chain; its full sequence is Mu-conotoxin SIIIA (73 aa).

Positions M1–A20 are cleaved as a signal peptide. The tract at residues A20–I40 is disordered. The propeptide occupies L21–D49. Basic and acidic residues predominate over residues P28–I40. At Q52 the chain carries Pyrrolidone carboxylic acid. Intrachain disulfides connect C54–C64, C55–C70, and C59–C71. C71 bears the Cysteine amide mark.

This sequence belongs to the conotoxin M superfamily. As to expression, expressed by the venom duct.

Its subcellular location is the secreted. Its function is as follows. Mu-conotoxins block voltage-gated sodium channels (Nav). This toxin moderately blocks rNav1.1/SCN1A, rNav1.2/SCN2A, rNav1.3/SCN3A, rNav1.4/SCN4A, and mNav1.6/SCN8A. The polypeptide is Mu-conotoxin SIIIA (Conus striatus (Striated cone)).